Reading from the N-terminus, the 259-residue chain is Trans-aconitate 2-methyltransferase (259 aa).

The protein belongs to the methyltransferase superfamily. Tam family.

It is found in the cytoplasm. The enzyme catalyses trans-aconitate + S-adenosyl-L-methionine = (E)-3-(methoxycarbonyl)pent-2-enedioate + S-adenosyl-L-homocysteine. In terms of biological role, catalyzes the S-adenosylmethionine monomethyl esterification of trans-aconitate. This is Trans-aconitate 2-methyltransferase from Variovorax paradoxus (strain S110).